The following is a 76-amino-acid chain: Putative defensin-like protein 121 (76 aa).

Residues 1 to 26 form the signal peptide; sequence MTYKATILAIFMIILVLGIGTKETRG. Cystine bridges form between cysteine 30-cysteine 74, cysteine 39-cysteine 59, cysteine 44-cysteine 68, and cysteine 48-cysteine 70.

The protein belongs to the DEFL family.

The protein localises to the secreted. The protein is Putative defensin-like protein 121 (LCR55) of Arabidopsis thaliana (Mouse-ear cress).